The primary structure comprises 549 residues: FMRFamide receptor (549 aa).

The Extracellular portion of the chain corresponds to 1–117; the sequence is MSGTAVARLL…NNRIEFWVCG (117 aa). Residues Asn59, Asn70, and Asn93 are each glycosylated (N-linked (GlcNAc...) asparagine). Residues 118-138 form a helical membrane-spanning segment; it reads VLINIVGVLGILGNIISMIIL. The Cytoplasmic portion of the chain corresponds to 139–158; it reads SRPQMRSSINYLLTGLARCD. The helical transmembrane segment at 159 to 179 threads the bilayer; the sequence is TVLIITSILLFGIPSIYPYTG. Residues 180–181 lie on the Extracellular side of the membrane; that stretch reads HF. Residues 182 to 202 form a helical membrane-spanning segment; the sequence is FGYYNYVYPFISPAVFPIGMI. Topologically, residues 203–238 are cytoplasmic; it reads AQTASIYMTFTVTLERYVAVCHPLKARALCTYGRAK. Residues 239–259 traverse the membrane as a helical segment; it reads IYFIVCVCFSLAYNMPRFWEV. At 260 to 289 the chain is on the extracellular side; it reads LTVTYPEPGKDVILHCVRPSRLRRSETYIN. Residues 290-310 traverse the membrane as a helical segment; it reads IYIHWCYLIVNYIIPFLTLAI. The Cytoplasmic segment spans residues 311–341; that stretch reads LNCLIYRQVKRANRERQRLSRSEKREIGLAT. A helical membrane pass occupies residues 342–362; that stretch reads MLLCVVIVFFMLNFLPLVLNI. Over 363–376 the chain is Extracellular; sequence SEAFYSTIDHKITK. The chain crosses the membrane as a helical span at residues 377 to 397; the sequence is ISNLLITINSSVNFLIYIIFG. Topologically, residues 398-549 are cytoplasmic; it reads EKFKRIFLLI…KKLGHVSSGF (152 aa).

It belongs to the G-protein coupled receptor 1 family. Expressed in ovaries, heads and bodies. Expressed in dopaminergic neurons.

Its subcellular location is the cell membrane. A receptor for the FMRFamide peptides. Reacts with high affinity to FMRFamide and intrinsic FMRFamide-related peptides. By stimulating intracellular calcium signaling through the inositol 1,4,5-trisphosphate receptor, Itpr, in dopaminergic neurons, may be involved in the maintenance of neuronal excitability and in the regulation of flight bout duration. This Drosophila melanogaster (Fruit fly) protein is FMRFamide receptor.